Here is a 621-residue protein sequence, read N- to C-terminus: Solute carrier family 2, facilitated glucose transporter member 12 (621 aa).

At 1–48 (MVPVENTEGPNLLNQKGTAVETEGSYRASGSRHPPWARGCGMFTFLSS) the chain is on the cytoplasmic side. A helical transmembrane segment spans residues 49–69 (VTAAVSGLLVGYELGIISGAL). Residues 70–84 (LQIKTLLTLSCHEQE) lie on the Extracellular side of the membrane. Residues 85-105 (MVVSSLLIGALLASLTGGVLI) form a helical membrane-spanning segment. Topologically, residues 106 to 119 (DRYGRRTAIILSSC) are cytoplasmic. The chain crosses the membrane as a helical span at residues 120-140 (LLGLGSLVLILSLSYTVLIVG). Residue R141 is a topological domain, extracellular. The helical transmembrane segment at 142–162 (IAIGVSISLSSIATCVYIAEI) threads the bilayer. Residues 163–176 (APQHRRGLLVSLNE) lie on the Cytoplasmic side of the membrane. Residues 177–197 (LMIVIGILSAYISNYAFANVF) form a helical membrane-spanning segment. At 198–201 (HGWK) the chain is on the extracellular side. The chain crosses the membrane as a helical span at residues 202 to 222 (YMFGLVIPLGILQAIAMYFLP). Residues 223–282 (PSPRFLVMKGQEGAASKVLGRLRALSDATEELTVIKSSLKDEYQYSFWDLFRSKDNMRTR) are Cytoplasmic-facing. A helical membrane pass occupies residues 283–303 (IMIGLTLVFFVQITGQPNILF). Over 304–321 (YASTVLKSVGFQSNEAAS) the chain is Extracellular. A helical transmembrane segment spans residues 322-342 (LASTGVGVVKVISTIPATLLV). Residues 343–349 (DHVGSKT) lie on the Cytoplasmic side of the membrane. Residues 350-370 (FLCIGSSVMAASLVTMGIVNL) form a helical membrane-spanning segment. Topologically, residues 371-470 (NIHMNFTNIC…PAFLKWLSLA (100 aa)) are extracellular. N375, N387, N400, and N405 each carry an N-linked (GlcNAc...) asparagine glycan. The chain crosses the membrane as a helical span at residues 471–491 (SLLVYVAAFSIGLGPMPWLVL). The Cytoplasmic segment spans residues 492 to 502 (SEIFPGGIRGR). A helical membrane pass occupies residues 503 to 523 (AMALTSSMNWGINLLISLTFL). The Extracellular segment spans residues 524 to 532 (TVTDLIGLP). The chain crosses the membrane as a helical span at residues 533–553 (WVCFIYTIMSLASLLFVVMFI). The Cytoplasmic portion of the chain corresponds to 554–621 (PETKGCSLEQ…GQSRQLSPEN (68 aa)).

The protein belongs to the major facilitator superfamily. Sugar transporter (TC 2.A.1.1) family. Glucose transporter subfamily.

It localises to the cell membrane. Its subcellular location is the endomembrane system. It is found in the cytoplasm. The protein resides in the perinuclear region. The catalysed reaction is D-glucose(out) = D-glucose(in). Insulin-independent facilitative glucose transporter. The chain is Solute carrier family 2, facilitated glucose transporter member 12 from Macaca fascicularis (Crab-eating macaque).